The primary structure comprises 448 residues: Phosphoglucosamine mutase (448 aa).

Residue serine 100 is the Phosphoserine intermediate of the active site. Residues serine 100, aspartate 240, aspartate 242, and aspartate 244 each coordinate Mg(2+). Residue serine 100 is modified to Phosphoserine.

Belongs to the phosphohexose mutase family. It depends on Mg(2+) as a cofactor. In terms of processing, activated by phosphorylation.

It carries out the reaction alpha-D-glucosamine 1-phosphate = D-glucosamine 6-phosphate. Functionally, catalyzes the conversion of glucosamine-6-phosphate to glucosamine-1-phosphate. This chain is Phosphoglucosamine mutase, found in Bacillus cereus (strain G9842).